Consider the following 464-residue polypeptide: Chitobiosyldiphosphodolichol beta-mannosyltransferase (464 aa).

Residues 1 to 2 (MA) lie on the Lumenal side of the membrane. The helical transmembrane segment at 3–23 (ASCLVLLALCLLLPLLLLGGW) threads the bilayer. Residues 24 to 99 (KRWRRGRTAR…ELQSLAVGPR (76 aa)) lie on the Cytoplasmic side of the membrane. Residues 100 to 120 (VFQYGVKVVFQAMYLLWKLMW) constitute an intramembrane region (helical). At 121–464 (REPGAYIFLQ…QTVLPLVMDT (344 aa)) the chain is on the cytoplasmic side. Ser-242 bears the Phosphoserine mark. Residues 242-261 (SPFRARSEPEDPATERSAFT) are disordered.

Belongs to the glycosyltransferase group 1 family. Glycosyltransferase 33 subfamily.

It localises to the endoplasmic reticulum membrane. It carries out the reaction an N,N'-diacetylchitobiosyl-diphospho-di-trans,poly-cis-dolichol + GDP-alpha-D-mannose = a beta-D-Man-(1-&gt;4)-beta-D-GlcNAc-(1-&gt;4)-alpha-D-GlcNAc-diphospho-di-trans,poly-cis-dolichol + GDP + H(+). It participates in protein modification; protein glycosylation. Mannosyltransferase that operates in the biosynthetic pathway of dolichol-linked oligosaccharides, the glycan precursors employed in protein asparagine (N)-glycosylation. The assembly of dolichol-linked oligosaccharides begins on the cytosolic side of the endoplasmic reticulum membrane and finishes in its lumen. The sequential addition of sugars to dolichol pyrophosphate produces dolichol-linked oligosaccharides containing fourteen sugars, including two GlcNAcs, nine mannoses and three glucoses. Once assembled, the oligosaccharide is transferred from the lipid to nascent proteins by oligosaccharyltransferases. Catalyzes, on the cytoplasmic face of the endoplasmic reticulum, the addition of the first mannose residues to the dolichol-linked oligosaccharide chain, to produce Man1GlcNAc(2)-PP-dolichol core oligosaccharide. Man1GlcNAc(2)-PP-dolichol is a substrate for ALG2, the following enzyme in the biosynthetic pathway. The polypeptide is Chitobiosyldiphosphodolichol beta-mannosyltransferase (Pongo abelii (Sumatran orangutan)).